The sequence spans 214 residues: Thymidylate kinase (214 aa).

Residue 10 to 17 (GGEGAGKS) participates in ATP binding.

This sequence belongs to the thymidylate kinase family.

The catalysed reaction is dTMP + ATP = dTDP + ADP. Its function is as follows. Phosphorylation of dTMP to form dTDP in both de novo and salvage pathways of dTTP synthesis. This chain is Thymidylate kinase, found in Brucella abortus (strain S19).